We begin with the raw amino-acid sequence, 155 residues long: MVAVKTMVEGGKATTGPPLGPALGPLGLNLGQVVKDINEKTKNFAGMQVPVTVNVIDPATKKYEIIVGVPPTSALLKKELGIEKGASKKKEKIAGNATLEQIKKVAESKRSALLSYNMKGAVLEVLGSAVSLGITVDGRDPKEVQKMIKNGEIEI.

The protein belongs to the universal ribosomal protein uL11 family. As to quaternary structure, part of the ribosomal stalk of the 50S ribosomal subunit. Interacts with L10 and the large rRNA to form the base of the stalk. L10 forms an elongated spine to which L12 dimers bind in a sequential fashion forming a multimeric L10(L12)X complex.

In terms of biological role, forms part of the ribosomal stalk which helps the ribosome interact with GTP-bound translation factors. In Picrophilus torridus (strain ATCC 700027 / DSM 9790 / JCM 10055 / NBRC 100828 / KAW 2/3), this protein is Large ribosomal subunit protein uL11.